A 509-amino-acid chain; its full sequence is Maturase K (509 aa).

This sequence belongs to the intron maturase 2 family. MatK subfamily.

The protein resides in the plastid. It is found in the chloroplast. Functionally, usually encoded in the trnK tRNA gene intron. Probably assists in splicing its own and other chloroplast group II introns. This chain is Maturase K, found in Schlumbergera truncata (Thanksgiving cactus).